The chain runs to 342 residues: S-adenosylmethionine:tRNA ribosyltransferase-isomerase (342 aa).

The protein belongs to the QueA family. In terms of assembly, monomer.

It localises to the cytoplasm. It catalyses the reaction 7-aminomethyl-7-carbaguanosine(34) in tRNA + S-adenosyl-L-methionine = epoxyqueuosine(34) in tRNA + adenine + L-methionine + 2 H(+). Its pathway is tRNA modification; tRNA-queuosine biosynthesis. In terms of biological role, transfers and isomerizes the ribose moiety from AdoMet to the 7-aminomethyl group of 7-deazaguanine (preQ1-tRNA) to give epoxyqueuosine (oQ-tRNA). The chain is S-adenosylmethionine:tRNA ribosyltransferase-isomerase from Streptococcus pyogenes serotype M2 (strain MGAS10270).